Consider the following 531-residue polypeptide: Laccase-4 (531 aa).

A signal peptide spans 1 to 19 (MLSSITLLPLLAAVSTPAF). 3 Plastocyanin-like domains span residues 23–146 (RNYK…LVIY), 158–315 (VDDA…LHYE), and 384–507 (SLPT…VSSR). An N-linked (GlcNAc...) asparagine glycan is attached at Asn-66. The Cu cation site is built by His-83 and His-85. Cys-104 and Cys-528 form a disulfide bridge. The N-linked (GlcNAc...) asparagine glycan is linked to Asn-109. Positions 128 and 130 each coordinate Cu cation. N-linked (GlcNAc...) asparagine glycans are attached at residues Asn-186, Asn-231, Asn-280, and Asn-395. Cu cation is bound by residues His-427, His-430, His-432, His-479, Cys-480, and His-481.

The protein belongs to the multicopper oxidase family. As to quaternary structure, homodimer. It depends on Cu cation as a cofactor. In terms of tissue distribution, in mycelia, at a higher level than LCC1, LCC2 and LCC3.

The protein localises to the secreted. The enzyme catalyses 4 hydroquinone + O2 = 4 benzosemiquinone + 2 H2O. Lignin degradation and detoxification of lignin-derived products. The protein is Laccase-4 (LCC4) of Thanatephorus cucumeris (Black scurf of potato).